The chain runs to 242 residues: Glutamate transport ATP-binding protein GluA (242 aa).

An ABC transporter domain is found at 2–236 (IKMTGVQKFF…PQTDRAKDFL (235 aa)). Residue 34–41 (GPSGSGKS) participates in ATP binding.

Belongs to the ABC transporter superfamily. As to quaternary structure, the complex is composed of two ATP-binding proteins (GluA), two transmembrane proteins (GluC and GluD) and a solute-binding protein (GluB).

The protein resides in the cell membrane. It catalyses the reaction a polar amino acid(out) + ATP + H2O = a polar amino acid(in) + ADP + phosphate + H(+). The catalysed reaction is L-glutamate(out) + ATP + H2O = L-glutamate(in) + ADP + phosphate + H(+). Its function is as follows. Part of the ABC transporter complex GluABCD involved in glutamate uptake. Probably responsible for energy coupling to the transport system. The chain is Glutamate transport ATP-binding protein GluA from Corynebacterium efficiens (strain DSM 44549 / YS-314 / AJ 12310 / JCM 11189 / NBRC 100395).